The following is a 392-amino-acid chain: Phosphoglycerate kinase (392 aa).

Substrate is bound by residues 21–23, Arg-36, 59–62, Arg-118, and Arg-151; these read DFN and HLGR. ATP-binding positions include Lys-201, Gly-292, Glu-323, and 349-352; that span reads GGDS.

Belongs to the phosphoglycerate kinase family. Monomer.

It localises to the cytoplasm. The catalysed reaction is (2R)-3-phosphoglycerate + ATP = (2R)-3-phospho-glyceroyl phosphate + ADP. It functions in the pathway carbohydrate degradation; glycolysis; pyruvate from D-glyceraldehyde 3-phosphate: step 2/5. This is Phosphoglycerate kinase from Borrelia hermsii (strain HS1 / DAH).